We begin with the raw amino-acid sequence, 265 residues long: Putative carbamate hydrolase RutD (265 aa).

The AB hydrolase-1 domain occupies 21-123; the sequence is PILLSAGMGG…TIVNGWARAD (103 aa).

This sequence belongs to the AB hydrolase superfamily. Hydrolase RutD family.

It carries out the reaction carbamate + 2 H(+) = NH4(+) + CO2. Functionally, involved in pyrimidine catabolism. May facilitate the hydrolysis of carbamate, a reaction that can also occur spontaneously. The protein is Putative carbamate hydrolase RutD of Azorhizobium caulinodans (strain ATCC 43989 / DSM 5975 / JCM 20966 / LMG 6465 / NBRC 14845 / NCIMB 13405 / ORS 571).